A 309-amino-acid chain; its full sequence is Cilia-and flagella-associated protein 96 (309 aa).

A disordered region spans residues 225 to 251 (TVGNPFKPSSPGKKAGGMKAGTFDPYP).

It belongs to the CFAP96 family.

It localises to the cytoplasm. The protein resides in the cytoskeleton. It is found in the microtubule organizing center. Its subcellular location is the centrosome. This Bos taurus (Bovine) protein is Cilia-and flagella-associated protein 96 (CFAP96).